Reading from the N-terminus, the 211-residue chain is Molybdenum cofactor guanylyltransferase (211 aa).

Residues 12–14 (LAG), Lys25, Asn53, Asp71, and Asp101 contribute to the GTP site. Mg(2+) is bound at residue Asp101.

Belongs to the MobA family. In terms of assembly, monomer. The cofactor is Mg(2+).

It localises to the cytoplasm. The enzyme catalyses Mo-molybdopterin + GTP + H(+) = Mo-molybdopterin guanine dinucleotide + diphosphate. Its function is as follows. Transfers a GMP moiety from GTP to Mo-molybdopterin (Mo-MPT) cofactor (Moco or molybdenum cofactor) to form Mo-molybdopterin guanine dinucleotide (Mo-MGD) cofactor. The polypeptide is Molybdenum cofactor guanylyltransferase (Acidovorax ebreus (strain TPSY) (Diaphorobacter sp. (strain TPSY))).